Here is a 451-residue protein sequence, read N- to C-terminus: E3 ubiquitin-protein ligase trul-1 (451 aa).

The RING-type; atypical zinc-finger motif lies at 13-54; sequence CSICFEDLKQNDKISAIVCGHIYHHGCISQWIATKRQCPSCR. Coiled-coil stretches lie at residues 96-130 and 209-243; these read LKVE…EKDK and NKDL…DAAI. Disordered regions lie at residues 270–297 and 389–442; these read RDVL…MIDP and KIPN…SSTS. The span at 427-442 shows a compositional bias: low complexity; it reads STRISSFFSRTTSSTS.

The protein belongs to the TRAIP family.

Its subcellular location is the nucleus. The protein localises to the chromosome. The catalysed reaction is S-ubiquitinyl-[E2 ubiquitin-conjugating enzyme]-L-cysteine + [acceptor protein]-L-lysine = [E2 ubiquitin-conjugating enzyme]-L-cysteine + N(6)-ubiquitinyl-[acceptor protein]-L-lysine.. It functions in the pathway protein modification; protein ubiquitination. E3 ubiquitin ligase that acts as a key regulator of DNA repair in response to replication stress. Acts by mediating ubiquitination of the CMG helicase complex, promoting the unloading of the CMG helicase complex by the p97 ATPase (cdc-48.1 or cdc-48.2). The protein is E3 ubiquitin-protein ligase trul-1 of Caenorhabditis elegans.